The sequence spans 349 residues: CCN family member 2 (349 aa).

A signal peptide spans 1–26; the sequence is MSATGLGPVRCAFVLLLALCSRPASS. The region spanning 27–98 is the IGFBP N-terminal domain; that stretch reads QDCSAPCQCP…NRKIGVCTAK (72 aa). Disulfide bonds link cysteine 29/cysteine 54, cysteine 33/cysteine 56, cysteine 35/cysteine 57, cysteine 43/cysteine 60, cysteine 68/cysteine 82, and cysteine 74/cysteine 95. The VWFC domain occupies 101–167; sequence APCVFGGTVY…GKCCEEWVCD (67 aa). One can recognise a TSP type-1 domain in the interval 198-243; the sequence is NCLVQTTEWSACSKTCGMGISTRVTNDNAFCRLEKQSRLCMVRPCE. The heparin-binding stretch occupies residues 247–349; that stretch reads EENIKKGKKC…YYRKMYGDMA (103 aa). 5 cysteine pairs are disulfide-bonded: cysteine 256/cysteine 293, cysteine 273/cysteine 307, cysteine 284/cysteine 323, cysteine 287/cysteine 325, and cysteine 292/cysteine 329. The region spanning 256-330 is the CTCK domain; sequence CIRTPKISKP…KTCACHYNCP (75 aa).

It belongs to the CCN family. In terms of assembly, monomer. Interacts with TSKU.

Its subcellular location is the secreted. It localises to the extracellular space. The protein localises to the extracellular matrix. Its function is as follows. Major connective tissue mitoattractant secreted by vascular endothelial cells. Promotes proliferation and differentiation of chondrocytes. Is involved in the stimulation of osteoblast differentiation and has a critical role in osteogenesis. Mediates heparin- and divalent cation-dependent cell adhesion in many cell types including fibroblasts, myofibroblasts, endothelial and epithelial cells. Enhances fibroblast growth factor-induced DNA synthesis. This chain is CCN family member 2 (CCN2), found in Bos taurus (Bovine).